A 121-amino-acid chain; its full sequence is Small ribosomal subunit protein uS13 (121 aa).

The tract at residues histidine 92 to arginine 121 is disordered. Over residues glutamine 101–arginine 121 the composition is skewed to basic residues.

Belongs to the universal ribosomal protein uS13 family. Part of the 30S ribosomal subunit. Forms a loose heterodimer with protein S19. Forms two bridges to the 50S subunit in the 70S ribosome.

Located at the top of the head of the 30S subunit, it contacts several helices of the 16S rRNA. In the 70S ribosome it contacts the 23S rRNA (bridge B1a) and protein L5 of the 50S subunit (bridge B1b), connecting the 2 subunits; these bridges are implicated in subunit movement. Contacts the tRNAs in the A and P-sites. This is Small ribosomal subunit protein uS13 from Petrotoga mobilis (strain DSM 10674 / SJ95).